The following is a 299-amino-acid chain: GTPase Era (299 aa).

The region spanning Lys-5–Glu-172 is the Era-type G domain. The G1 stretch occupies residues Gly-13 to Ser-20. Gly-13–Ser-20 serves as a coordination point for GTP. The tract at residues Gln-39–Asn-43 is G2. Residues Asp-60 to Gly-63 are G3. Residues Asp-60–Ile-64 and Asn-122–Asp-125 each bind GTP. Residues Asn-122 to Asp-125 form a G4 region. The tract at residues Ile-151 to Ala-153 is G5. One can recognise a KH type-2 domain in the interval Thr-203–Arg-280.

It belongs to the TRAFAC class TrmE-Era-EngA-EngB-Septin-like GTPase superfamily. Era GTPase family. In terms of assembly, monomer.

The protein localises to the cytoplasm. It is found in the cell membrane. Its function is as follows. An essential GTPase that binds both GDP and GTP, with rapid nucleotide exchange. Plays a role in 16S rRNA processing and 30S ribosomal subunit biogenesis and possibly also in cell cycle regulation and energy metabolism. This chain is GTPase Era, found in Staphylococcus aureus (strain NCTC 8325 / PS 47).